A 237-amino-acid chain; its full sequence is Ribosomal RNA small subunit methyltransferase G (237 aa).

S-adenosyl-L-methionine-binding positions include Gly-76, Phe-81, 99–101 (DSS), 128–129 (IE), and Arg-147.

It belongs to the methyltransferase superfamily. RNA methyltransferase RsmG family.

The protein localises to the cytoplasm. Its function is as follows. Specifically methylates the N7 position of a guanine in 16S rRNA. The polypeptide is Ribosomal RNA small subunit methyltransferase G (Prochlorococcus marinus (strain MIT 9312)).